The following is a 62-amino-acid chain: Photosystem II reaction center protein Z (62 aa).

The next 2 helical transmembrane spans lie at 8 to 28 (AVFA…VVLA) and 41 to 61 (FSGA…NSFV).

Belongs to the PsbZ family. As to quaternary structure, PSII is composed of 1 copy each of membrane proteins PsbA, PsbB, PsbC, PsbD, PsbE, PsbF, PsbH, PsbI, PsbJ, PsbK, PsbL, PsbM, PsbT, PsbY, PsbZ, Psb30/Ycf12, at least 3 peripheral proteins of the oxygen-evolving complex and a large number of cofactors. It forms dimeric complexes.

The protein localises to the plastid. Its subcellular location is the chloroplast thylakoid membrane. In terms of biological role, may control the interaction of photosystem II (PSII) cores with the light-harvesting antenna, regulates electron flow through the 2 photosystem reaction centers. PSII is a light-driven water plastoquinone oxidoreductase, using light energy to abstract electrons from H(2)O, generating a proton gradient subsequently used for ATP formation. This Zygnema circumcarinatum (Green alga) protein is Photosystem II reaction center protein Z.